The primary structure comprises 196 residues: CASP-like protein 2U1 (196 aa).

Residues 1-11 are Cytoplasmic-facing; it reads MAPMECVRRRN. A helical membrane pass occupies residues 12–32; sequence VGELVLRCAATLVCMLSLMLL. Residues 33–58 are Extracellular-facing; sequence VRDQQIAVQEVGVTSVTTQLRYSSST. The chain crosses the membrane as a helical span at residues 59 to 79; it reads GLVYLVYANGLVALYCFVVVL. The Cytoplasmic segment spans residues 80–95; it reads TSSFNGGSVMRRNKSG. Residues 96 to 116 form a helical membrane-spanning segment; that stretch reads AWALFVLDQVLACILLSAASA. At 117 to 148 the chain is on the extracellular side; the sequence is ASEIAFLVEKGAKKTIWDSKCIVYGHFCRMLE. Residues 149 to 169 traverse the membrane as a helical segment; it reads VSIATSFIAVIMLGSICVLSA. Over 170–196 the chain is Cytoplasmic; sequence KQLFQQYTHYARIVNMVKLKSTPNSLL.

The protein belongs to the Casparian strip membrane proteins (CASP) family. Homodimer and heterodimers.

The protein resides in the cell membrane. The chain is CASP-like protein 2U1 from Pteridium aquilinum subsp. aquilinum (Bracken fern).